A 779-amino-acid chain; its full sequence is Ribonucleoside-diphosphate reductase large subunit (779 aa).

Substrate contacts are provided by residues serine 178, 193 to 194 (SC), glycine 222, 420 to 424 (NLCIE), and 614 to 618 (PTATS). Cysteine 194 and cysteine 440 are oxidised to a cystine. Asparagine 420 serves as the catalytic Proton acceptor. The active-site Cysteine radical intermediate is cysteine 422. Glutamate 424 serves as the catalytic Proton acceptor.

Belongs to the ribonucleoside diphosphate reductase large chain family. In terms of assembly, heterotetramer composed of a homodimer of the large subunit (R1) and a homodimer of the small subunit (R2). Larger multisubunit protein complex are also active, composed of (R1)n(R2)n.

It carries out the reaction a 2'-deoxyribonucleoside 5'-diphosphate + [thioredoxin]-disulfide + H2O = a ribonucleoside 5'-diphosphate + [thioredoxin]-dithiol. Its activity is regulated as follows. Under complex allosteric control mediated by deoxynucleoside triphosphates and ATP binding. The type of nucleotide bound at the specificity site determines substrate preference. It seems probable that ATP makes the enzyme reduce CDP and UDP, dGTP favors ADP reduction and dTTP favors GDP reduction. In terms of biological role, ribonucleoside-diphosphate reductase holoenzyme provides the precursors necessary for viral DNA synthesis. Allows virus growth in non-dividing cells. Catalyzes the biosynthesis of deoxyribonucleotides from the corresponding ribonucleotides. The protein is Ribonucleoside-diphosphate reductase large subunit of Ornithodoros (relapsing fever ticks).